An 81-amino-acid chain; its full sequence is ATP synthase subunit c, chloroplastic (81 aa).

A run of 2 helical transmembrane segments spans residues 3 to 23 and 57 to 77; these read AIVS…AAIG and LAFM…LLFA.

The protein belongs to the ATPase C chain family. As to quaternary structure, F-type ATPases have 2 components, F(1) - the catalytic core - and F(0) - the membrane proton channel. F(1) has five subunits: alpha(3), beta(3), gamma(1), delta(1), epsilon(1). F(0) has four main subunits: a(1), b(1), b'(1) and c(10-14). The alpha and beta chains form an alternating ring which encloses part of the gamma chain. F(1) is attached to F(0) by a central stalk formed by the gamma and epsilon chains, while a peripheral stalk is formed by the delta, b and b' chains.

It localises to the plastid. The protein resides in the chloroplast thylakoid membrane. Its function is as follows. F(1)F(0) ATP synthase produces ATP from ADP in the presence of a proton or sodium gradient. F-type ATPases consist of two structural domains, F(1) containing the extramembraneous catalytic core and F(0) containing the membrane proton channel, linked together by a central stalk and a peripheral stalk. During catalysis, ATP synthesis in the catalytic domain of F(1) is coupled via a rotary mechanism of the central stalk subunits to proton translocation. In terms of biological role, key component of the F(0) channel; it plays a direct role in translocation across the membrane. A homomeric c-ring of between 10-14 subunits forms the central stalk rotor element with the F(1) delta and epsilon subunits. The protein is ATP synthase subunit c, chloroplastic of Cyanidioschyzon merolae (strain NIES-3377 / 10D) (Unicellular red alga).